The following is a 402-amino-acid chain: La-related protein 7 homolog (402 aa).

An HTH La-type RNA-binding-like region region spans residues 64 to 138; sequence EPLNPDFLSA…FDNSSHMVIR (75 aa). The RRM-like region stretch occupies residues 148–230; that stretch reads IPLYDRIIYV…LTRKEWTNRE (83 aa). Residues 288-400 form a xRRM-like region region; the sequence is DFTKNLLTRI…EEEKNYWRML (113 aa). Residues 288 to 402 enclose the xRRM domain; that stretch reads DFTKNLLTRI…EKNYWRMLKK (115 aa).

It belongs to the LARP7 family. As to quaternary structure, component of the telomerase holoenzyme complex composed minimally of trt1 and the telomerase RNA template component. Interacts with skp1.

The protein localises to the chromosome. It is found in the telomere. It localises to the nucleus. Its subcellular location is the cytoplasm. In terms of biological role, RNA-binding protein required for assembly of the holoenzyme telomerase ribonucleoprotein (RNP) complex. Specifically binds telomerase RNA ter1 and promotes assembly of ter1 with catalytic subunit trt1. Telomerase is a ribonucleoprotein enzyme essential that copies new telomeric repeats onto chromosome ends and functions to maintain cell division. The chain is La-related protein 7 homolog from Schizosaccharomyces pombe (strain 972 / ATCC 24843) (Fission yeast).